The primary structure comprises 461 residues: Argininosuccinate lyase (461 aa).

The protein belongs to the lyase 1 family. Argininosuccinate lyase subfamily.

Its subcellular location is the cytoplasm. The catalysed reaction is 2-(N(omega)-L-arginino)succinate = fumarate + L-arginine. The protein operates within amino-acid biosynthesis; L-arginine biosynthesis; L-arginine from L-ornithine and carbamoyl phosphate: step 3/3. This chain is Argininosuccinate lyase, found in Shewanella piezotolerans (strain WP3 / JCM 13877).